A 122-amino-acid chain; its full sequence is NADH-quinone oxidoreductase subunit A (122 aa).

3 helical membrane-spanning segments follow: residues 10–30 (MIVLIFLLLGILLPVVALTLG), 66–86 (IFALLFVIFDVETLFLYPWAV), and 91–111 (LGLFALIEMLIFVVMLLVGLA).

It belongs to the complex I subunit 3 family. In terms of assembly, NDH-1 is composed of 14 different subunits. Subunits NuoA, H, J, K, L, M, N constitute the membrane sector of the complex.

The protein localises to the cell membrane. It catalyses the reaction a quinone + NADH + 5 H(+)(in) = a quinol + NAD(+) + 4 H(+)(out). Functionally, NDH-1 shuttles electrons from NADH, via FMN and iron-sulfur (Fe-S) centers, to quinones in the respiratory chain. The immediate electron acceptor for the enzyme in this species is believed to be a menaquinone. Couples the redox reaction to proton translocation (for every two electrons transferred, four hydrogen ions are translocated across the cytoplasmic membrane), and thus conserves the redox energy in a proton gradient. The sequence is that of NADH-quinone oxidoreductase subunit A from Bacillus thuringiensis subsp. konkukian (strain 97-27).